We begin with the raw amino-acid sequence, 300 residues long: MATVVYQSYFESQHFEPRALRLRLSSHTNPQLSTPLKSHFQNSSIAPQDNPITINAASLPSSSPNPSSNSDTNSGSWSFLESLSNSSSNDKEKKTLPLFQSPSSRRTLSDESLALCTESLGSETGSDIIHEDMFSISSELQTMETRTTSTTSNPSRQDRKRNTMASLPPPLTSMIGFDCIEVKSHRENGRLVMMATRPPPRNRCLQDRSNGCVRLAILIDSDDHIETETKEEKEEEEEETIETVRDNEEEIPEYKEEEEEKEEEIKVKGVEKVQRSRRCIEGDRENRGFLNWESLCVATS.

The segment covering 30–56 (PQLSTPLKSHFQNSSIAPQDNPITINA) has biased composition (polar residues). Disordered stretches follow at residues 30–104 (PQLS…SPSS), 142–170 (TMETRTTSTTSNPSRQDRKRNTMASLPPP), and 227–264 (TETKEEKEEEEEETIETVRDNEEEIPEYKEEEEEKEEE). Composition is skewed to low complexity over residues 58 to 88 (SLPSSSPNPSSNSDTNSGSWSFLESLSNSSS) and 142 to 151 (TMETRTTSTT). The FAF domain maps to 166 to 217 (SLPPPLTSMIGFDCIEVKSHRENGRLVMMATRPPPRNRCLQDRSNGCVRLAI). A compositionally biased stretch (acidic residues) spans 233 to 262 (KEEEEEETIETVRDNEEEIPEYKEEEEEKE).

This sequence belongs to the fantastic four family. In terms of tissue distribution, expressed in the shoot apex and young siliques. Detected in provascular and vascular tissue, but not in the vegetative meristem. In inflorescences, restricted to the base of the flower and to the vasculature of the stem and the pedicels, but absent from young flowers. Detected in the center of the inflorescence meristem.

Functionally, regulates the size of the shoot meristem by modulating the CLV3-WUS feedback loop. Can repress WUS but is under negative control by CLV3. In Arabidopsis thaliana (Mouse-ear cress), this protein is Protein FANTASTIC FOUR 4 (FAF4).